The chain runs to 382 residues: V-type proton ATPase subunit C 1 (382 aa).

Thr-2 carries the post-translational modification N-acetylthreonine.

Belongs to the V-ATPase C subunit family. V-ATPase is a heteromultimeric enzyme made up of two complexes: the ATP-hydrolytic V1 complex and the proton translocation V0 complex. The V1 complex consists of three catalytic AB heterodimers that form a heterohexamer, three peripheral stalks each consisting of EG heterodimers, one central rotor including subunits D and F, and the regulatory subunits C and H. The proton translocation complex V0 consists of the proton transport subunit a, a ring of proteolipid subunits c9c'', rotary subunit d, subunits e and f, and the accessory subunits ATP6AP1/Ac45 and ATP6AP2/PRR. As to expression, expressed in brain (at protein level).

Its subcellular location is the cytoplasmic vesicle. The protein localises to the secretory vesicle. It localises to the synaptic vesicle membrane. The protein resides in the clathrin-coated vesicle membrane. Functionally, subunit of the V1 complex of vacuolar(H+)-ATPase (V-ATPase), a multisubunit enzyme composed of a peripheral complex (V1) that hydrolyzes ATP and a membrane integral complex (V0) that translocates protons. V-ATPase is responsible for acidifying and maintaining the pH of intracellular compartments and in some cell types, is targeted to the plasma membrane, where it is responsible for acidifying the extracellular environment. Subunit C is necessary for the assembly of the catalytic sector of the enzyme and is likely to have a specific function in its catalytic activity. The chain is V-type proton ATPase subunit C 1 (Atp6v1c1) from Rattus norvegicus (Rat).